Here is a 443-residue protein sequence, read N- to C-terminus: ATP-dependent protease ATPase subunit HslU (443 aa).

ATP is bound by residues isoleucine 18, 60 to 65 (GVGKTE), aspartate 256, glutamate 321, and arginine 393.

Belongs to the ClpX chaperone family. HslU subfamily. As to quaternary structure, a double ring-shaped homohexamer of HslV is capped on each side by a ring-shaped HslU homohexamer. The assembly of the HslU/HslV complex is dependent on binding of ATP.

Its subcellular location is the cytoplasm. In terms of biological role, ATPase subunit of a proteasome-like degradation complex; this subunit has chaperone activity. The binding of ATP and its subsequent hydrolysis by HslU are essential for unfolding of protein substrates subsequently hydrolyzed by HslV. HslU recognizes the N-terminal part of its protein substrates and unfolds these before they are guided to HslV for hydrolysis. The protein is ATP-dependent protease ATPase subunit HslU of Salmonella typhi.